The primary structure comprises 876 residues: Alanine--tRNA ligase (876 aa).

4 residues coordinate Zn(2+): His565, His569, Cys667, and His671.

This sequence belongs to the class-II aminoacyl-tRNA synthetase family. Zn(2+) serves as cofactor.

The protein localises to the cytoplasm. The catalysed reaction is tRNA(Ala) + L-alanine + ATP = L-alanyl-tRNA(Ala) + AMP + diphosphate. In terms of biological role, catalyzes the attachment of alanine to tRNA(Ala) in a two-step reaction: alanine is first activated by ATP to form Ala-AMP and then transferred to the acceptor end of tRNA(Ala). Also edits incorrectly charged Ser-tRNA(Ala) and Gly-tRNA(Ala) via its editing domain. In Staphylococcus saprophyticus subsp. saprophyticus (strain ATCC 15305 / DSM 20229 / NCIMB 8711 / NCTC 7292 / S-41), this protein is Alanine--tRNA ligase.